The following is a 1200-amino-acid chain: ATP-dependent helicase/deoxyribonuclease subunit B (1200 aa).

The protein belongs to the helicase family. AddB/RexB type 2 subfamily. In terms of assembly, heterodimer of AddA and RexB. The cofactor is Mg(2+).

Its function is as follows. The heterodimer acts as both an ATP-dependent DNA helicase and an ATP-dependent, dual-direction single-stranded exonuclease. Recognizes the chi site generating a DNA molecule suitable for the initiation of homologous recombination. This subunit has 5' -&gt; 3' nuclease activity but not helicase activity. The sequence is that of ATP-dependent helicase/deoxyribonuclease subunit B from Lactiplantibacillus plantarum (strain ATCC BAA-793 / NCIMB 8826 / WCFS1) (Lactobacillus plantarum).